The following is a 57-amino-acid chain: UPF0509 protein YciZ (57 aa).

Belongs to the UPF0509 family.

This chain is UPF0509 protein YciZ (yciZ), found in Shigella flexneri.